We begin with the raw amino-acid sequence, 2472 residues long: Spectrin alpha chain, non-erythrocytic 1 (2472 aa).

Met1 is subject to N-acetylmethionine. Spectrin repeat units lie at residues Arg45–Leu146, Lys150–Leu251, Glu256–Asp358, Tyr361–Gln465, Asp468–Ala570, His574–Glu676, Gln679–Ala781, Arg785–Asp888, and Gln891–Ala961. At Ser587 the chain carries Phosphoserine. An N6-acetyllysine modification is found at Lys637. The residue at position 803 (Lys803) is an N6-acetyllysine. A phosphoserine mark is found at Ser924, Ser982, Ser999, Ser1029, Ser1031, and Ser1041. The SH3 domain occupies Thr967–Pro1026. One copy of the Spectrin 10 repeat lies at Leu1096 to Glu1166. Phosphotyrosine is present on Tyr1176. 7 positions are modified to phosphoserine: Ser1190, Ser1207, Ser1217, Ser1291, Ser1306, Ser1323, and Ser1338. The stretch at His1233–Gly1336 is one Spectrin 11 repeat. 2 Spectrin repeats span residues His1339 to Leu1441 and Glu1446 to Glu1549. N6-acetyllysine is present on Lys1519. Ser1550, Ser1557, Ser1578, Ser1615, and Ser1647 each carry phosphoserine. Spectrin repeat units lie at residues Thr1552–Glu1656, Lys1659–Glu1762, His1764–Glu1868, Glu1871–Glu1974, Phe1978–Glu2081, Leu2092–Gln2194, and Leu2206–Gln2310. Residue Thr2020 is modified to Phosphothreonine. Lys2052 carries the N6-acetyllysine modification. Phosphothreonine is present on Thr2066. EF-hand domains are found at residues Glu2323 to Asp2358, Glu2366 to Glu2401, and Lys2404 to Asp2439. The Ca(2+) site is built by Asp2336, Asp2338, Ser2340, Arg2342, Glu2347, Asp2379, Asn2381, Asp2383, His2385, and Glu2390. At Lys2421 the chain carries N6-acetyllysine.

This sequence belongs to the spectrin family. Like erythrocyte spectrin, the spectrin-like proteins are capable of forming dimers which can further associate to tetramers. Interacts (via C-terminal spectrin repeats) with TRPC4. Interacts with CALM and EMD. Interacts with isoform 1 of ACP1. Identified in a complex with ACTN4, CASK, IQGAP1, MAGI2, NPHS1 and SPTBN1. Interacts with SHANK3 (via ANK repeats). Interacts with CLN3; this interaction regulates the fodrin localization at the plasma membrane. In terms of processing, phosphorylation of Tyr-1176 decreases sensitivity to cleavage by calpain in vitro. As to expression, expressed in the foot process layer of podocytes in the kidney glomerulus and in tubules (at protein level).

The protein localises to the cytoplasm. The protein resides in the cytoskeleton. Its subcellular location is the cell cortex. Its function is as follows. Fodrin, which seems to be involved in secretion, interacts with calmodulin in a calcium-dependent manner and is thus candidate for the calcium-dependent movement of the cytoskeleton at the membrane. The sequence is that of Spectrin alpha chain, non-erythrocytic 1 (Sptan1) from Rattus norvegicus (Rat).